A 231-amino-acid chain; its full sequence is Probable methylthioribulose-1-phosphate dehydratase (231 aa).

C82 contributes to the substrate binding site. Zn(2+) contacts are provided by H100 and H102. E123 functions as the Proton donor/acceptor in the catalytic mechanism. Position 181 (H181) interacts with Zn(2+).

The protein belongs to the aldolase class II family. MtnB subfamily. Zn(2+) serves as cofactor.

It is found in the cytoplasm. The enzyme catalyses 5-(methylsulfanyl)-D-ribulose 1-phosphate = 5-methylsulfanyl-2,3-dioxopentyl phosphate + H2O. Its pathway is amino-acid biosynthesis; L-methionine biosynthesis via salvage pathway; L-methionine from S-methyl-5-thio-alpha-D-ribose 1-phosphate: step 2/6. In terms of biological role, catalyzes the dehydration of methylthioribulose-1-phosphate (MTRu-1-P) into 2,3-diketo-5-methylthiopentyl-1-phosphate (DK-MTP-1-P). The sequence is that of Probable methylthioribulose-1-phosphate dehydratase from Dictyostelium discoideum (Social amoeba).